The primary structure comprises 160 residues: MSKIAVYPGSFDPITMGHVDIINRISPLYDEVIVLVAQSSQKQSMFSVEERKTLIEKALSHLKNVKVDIFGGLTVEYMKKAKAQVIVRGLRAVSDFEYEMTMANMNRKLAPDFETLLVFASPEFYYISSRGVKEVAINGGALKGLVPDVVVEAMENKIRK.

Residue Ser10 coordinates substrate. ATP is bound by residues 10-11 (SF) and His18. Substrate contacts are provided by Lys42, Thr74, and Arg88. Residues 89–91 (GLR), Glu99, and 124–130 (FYYISSR) each bind ATP.

This sequence belongs to the bacterial CoaD family. Homohexamer. It depends on Mg(2+) as a cofactor.

It is found in the cytoplasm. The catalysed reaction is (R)-4'-phosphopantetheine + ATP + H(+) = 3'-dephospho-CoA + diphosphate. Its pathway is cofactor biosynthesis; coenzyme A biosynthesis; CoA from (R)-pantothenate: step 4/5. Its function is as follows. Reversibly transfers an adenylyl group from ATP to 4'-phosphopantetheine, yielding dephospho-CoA (dPCoA) and pyrophosphate. The chain is Phosphopantetheine adenylyltransferase from Bdellovibrio bacteriovorus (strain ATCC 15356 / DSM 50701 / NCIMB 9529 / HD100).